Reading from the N-terminus, the 1074-residue chain is Semaphorin-5A (1074 aa).

Residues 1 to 22 (MKGTCVIAWLFSSLGLWRLAHP) form the signal peptide. At 23–968 (EAQGTTQCQR…EEKRCGEFNM (946 aa)) the chain is on the extracellular side. Residues 35–484 (HPVISYKEIG…LREHVVKIPL (450 aa)) form the Sema domain. Disulfide bonds link Cys-104–Cys-114 and Cys-131–Cys-140. Asn-142, Asn-168, Asn-227, and Asn-277 each carry an N-linked (GlcNAc...) asparagine glycan. 2 disulfide bridges follow: Cys-254–Cys-357 and Cys-278–Cys-320. N-linked (GlcNAc...) asparagine glycosylation is found at Asn-323, Asn-367, and Asn-437. Disulfide bonds link Cys-487-Cys-504 and Cys-496-Cys-513. N-linked (GlcNAc...) asparagine glycosylation is found at Asn-536 and Asn-591. TSP type-1 domains are found at residues 540–593 (DGHF…ANCS), 595–651 (NGGW…LLCP), 653–702 (HMFW…NPCP), 707–765 (TTPW…GCST), 784–839 (NGAW…LPCP), 841–896 (DGVW…QPCP), and 897–944 (ESWS…VFDS). 6 disulfide bridges follow: Cys-607–Cys-644, Cys-611–Cys-650, Cys-622–Cys-634, Cys-665–Cys-696, Cys-669–Cys-701, and Cys-680–Cys-686. Asn-717 is a glycosylation site (N-linked (GlcNAc...) asparagine). Disulfide bonds link Cys-796/Cys-833, Cys-800/Cys-838, Cys-811/Cys-823, Cys-853/Cys-890, Cys-857/Cys-895, and Cys-868/Cys-880. The N-linked (GlcNAc...) asparagine glycan is linked to Asn-933. A helical transmembrane segment spans residues 969-989 (FHMIAVGLSSSILGCLLTLLV). Over 990–1074 (YTYCQRYQQQ…FTDLNNYDEY (85 aa)) the chain is Cytoplasmic.

The protein belongs to the semaphorin family. As to quaternary structure, binds PLXNB3.

It localises to the membrane. In terms of biological role, bifunctional axonal guidance cue regulated by sulfated proteoglycans; attractive effects result from interactions with heparan sulfate proteoglycans (HSPGs), while the inhibitory effects depend on interactions with chondroitin sulfate proteoglycans (CSPGs). Ligand for receptor PLXNB3. In glioma cells, SEMA5A stimulation of PLXNB3 results in the disassembly of F-actin stress fibers, disruption of focal adhesions and cellular collapse as well as inhibition of cell migration and invasion through ARHGDIA-mediated inactivation of RAC1. May promote angiogenesis by increasing endothelial cell proliferation and migration and inhibiting apoptosis. The sequence is that of Semaphorin-5A (SEMA5A) from Homo sapiens (Human).